The primary structure comprises 65 residues: Light-harvesting protein B800/830/1020 beta-2 chain (65 aa).

The Cytoplasmic segment spans residues 1-17; the sequence is TDIRTGLTDEECQEIHE. A bacteriochlorophyll-binding residues include His-16 and Asn-34. The chain crosses the membrane as a helical span at residues 18–40; it reads MNMLGMHAYWSIGLIANALAYAW. Over 41 to 65 the chain is Periplasmic; sequence RPFHQGRAGNRLEDHAPDYVRSALT.

The protein belongs to the antenna complex beta subunit family. In terms of assembly, the core complex is formed by different alpha and beta chains, binding bacteriochlorophyll molecules, and arranged most probably in tetrameric structures disposed around the reaction center. The non-pigmented gamma chains may constitute additional components.

It is found in the cell inner membrane. Antenna complexes are light-harvesting systems, which transfer the excitation energy to the reaction centers. In Halorhodospira halochloris (Ectothiorhodospira halochloris), this protein is Light-harvesting protein B800/830/1020 beta-2 chain.